The following is a 327-amino-acid chain: Ribose-phosphate pyrophosphokinase (327 aa).

Residues 40–42 (DGE) and 99–100 (RQ) each bind ATP. Residues histidine 134 and aspartate 173 each contribute to the Mg(2+) site. Residue lysine 196 is part of the active site. D-ribose 5-phosphate-binding positions include arginine 198, aspartate 222, and 226–230 (DTANT).

Belongs to the ribose-phosphate pyrophosphokinase family. Class I subfamily. As to quaternary structure, homohexamer. It depends on Mg(2+) as a cofactor.

It is found in the cytoplasm. It carries out the reaction D-ribose 5-phosphate + ATP = 5-phospho-alpha-D-ribose 1-diphosphate + AMP + H(+). The protein operates within metabolic intermediate biosynthesis; 5-phospho-alpha-D-ribose 1-diphosphate biosynthesis; 5-phospho-alpha-D-ribose 1-diphosphate from D-ribose 5-phosphate (route I): step 1/1. Functionally, involved in the biosynthesis of the central metabolite phospho-alpha-D-ribosyl-1-pyrophosphate (PRPP) via the transfer of pyrophosphoryl group from ATP to 1-hydroxyl of ribose-5-phosphate (Rib-5-P). This chain is Ribose-phosphate pyrophosphokinase, found in Neisseria meningitidis serogroup A / serotype 4A (strain DSM 15465 / Z2491).